Reading from the N-terminus, the 124-residue chain is S-phase delaying protein 1 (124 aa).

A compositionally biased stretch (polar residues) spans 1–31; the sequence is MHSSKRVMTTKTHVEQPESSMRPQLPESIQG. The disordered stretch occupies residues 1 to 32; it reads MHSSKRVMTTKTHVEQPESSMRPQLPESIQGS.

This sequence belongs to the DIF1/spd1 family. As to quaternary structure, interacts with cdc22. In terms of processing, ubiquitinated by the DCX(DTL) complex, also named CRL4(CDT2) complex, leading to its degradation.

It is found in the cytoplasm. It localises to the nucleus. In terms of biological role, regulates the ribonucleotide reductase activity through its mediation of the nuclear localization of suc22, the small subunit of the ribonucleotide reductase. Delays the progression of the G1-S phase transition, thereby ensuring the G1 phase is complete. Interacts with both p34 and the p34-p56 complex, although no direct inhibitory effect on the bound proteins has been demonstrated. The action of p14 may happen coincidentally with the cdc10 function or may happen downstream of this. This Schizosaccharomyces pombe (strain 972 / ATCC 24843) (Fission yeast) protein is S-phase delaying protein 1 (spd1).